A 197-amino-acid polypeptide reads, in one-letter code: Nucleoside triphosphate pyrophosphatase (197 aa).

The Proton acceptor role is filled by aspartate 70.

It belongs to the Maf family. The cofactor is a divalent metal cation.

Its subcellular location is the cytoplasm. It catalyses the reaction a ribonucleoside 5'-triphosphate + H2O = a ribonucleoside 5'-phosphate + diphosphate + H(+). The enzyme catalyses a 2'-deoxyribonucleoside 5'-triphosphate + H2O = a 2'-deoxyribonucleoside 5'-phosphate + diphosphate + H(+). Functionally, nucleoside triphosphate pyrophosphatase. May have a dual role in cell division arrest and in preventing the incorporation of modified nucleotides into cellular nucleic acids. This Shigella flexneri protein is Nucleoside triphosphate pyrophosphatase (yhdE).